A 753-amino-acid polypeptide reads, in one-letter code: 5-methyltetrahydropteroyltriglutamate--homocysteine methyltransferase (753 aa).

5-methyltetrahydropteroyltri-L-glutamate-binding positions include 17–20 (RELK) and lysine 117. L-homocysteine-binding positions include 431–433 (IGS) and glutamate 484. Residues 431–433 (IGS) and glutamate 484 contribute to the L-methionine site. 5-methyltetrahydropteroyltri-L-glutamate is bound by residues 515-516 (RC) and tryptophan 561. Residue aspartate 599 participates in L-homocysteine binding. Aspartate 599 contacts L-methionine. Glutamate 605 contacts 5-methyltetrahydropteroyltri-L-glutamate. The Zn(2+) site is built by histidine 641, cysteine 643, and glutamate 665. The active-site Proton donor is the histidine 694. Cysteine 726 provides a ligand contact to Zn(2+).

This sequence belongs to the vitamin-B12 independent methionine synthase family. Requires Zn(2+) as cofactor.

It catalyses the reaction 5-methyltetrahydropteroyltri-L-glutamate + L-homocysteine = tetrahydropteroyltri-L-glutamate + L-methionine. Its pathway is amino-acid biosynthesis; L-methionine biosynthesis via de novo pathway; L-methionine from L-homocysteine (MetE route): step 1/1. Functionally, catalyzes the transfer of a methyl group from 5-methyltetrahydrofolate to homocysteine resulting in methionine formation. This Escherichia coli O9:H4 (strain HS) protein is 5-methyltetrahydropteroyltriglutamate--homocysteine methyltransferase.